Here is a 467-residue protein sequence, read N- to C-terminus: Cytochrome c-552 (467 aa).

Positions 1–27 (MMKKMTGKSFALSALVAASFMAAGAMA) are cleaved as a signal peptide. A heme c-binding site is contributed by His-87. Heme contacts are provided by Cys-115, Cys-118, and Lys-119. Heme c-binding residues include Cys-153, Cys-156, His-157, Cys-195, Cys-198, and His-199. 4 residues coordinate Ca(2+): Glu-201, Tyr-202, Lys-250, and Gln-252. Tyr-202 contributes to the substrate binding site. Position 253 (His-253) interacts with substrate. His-264, Cys-271, Cys-274, His-275, His-290, Cys-303, Cys-306, His-307, and His-382 together coordinate heme c.

Belongs to the cytochrome c-552 family. It depends on Ca(2+) as a cofactor. Heme c serves as cofactor.

Its subcellular location is the periplasm. The enzyme catalyses 6 Fe(III)-[cytochrome c] + NH4(+) + 2 H2O = 6 Fe(II)-[cytochrome c] + nitrite + 8 H(+). Its pathway is nitrogen metabolism; nitrate reduction (assimilation). Functionally, catalyzes the reduction of nitrite to ammonia, consuming six electrons in the process. In Shewanella sp. (strain MR-4), this protein is Cytochrome c-552.